Consider the following 497-residue polypeptide: tRNA-2-methylthio-N(6)-dimethylallyladenosine synthase (497 aa).

Residues 1–48 (MTGTSNIPTHGKEHKDAPALLPLPAPNTHHTHAAHPGDPSHDRHPSRG) are disordered. Residues 18–28 (PALLPLPAPNT) show a composition bias toward low complexity. The MTTase N-terminal domain maps to 48–165 (GKLFIKTHGC…LPDMIRARRE (118 aa)). The [4Fe-4S] cluster site is built by C57, C94, C128, C202, C206, and C209. Residues 188-430 (RAEGPSAFVS…QKHINAYAAD (243 aa)) form the Radical SAM core domain. Positions 433-496 (KRMIGTVQTV…TNSLRGRVHT (64 aa)) constitute a TRAM domain.

Belongs to the methylthiotransferase family. MiaB subfamily. As to quaternary structure, monomer. [4Fe-4S] cluster serves as cofactor.

Its subcellular location is the cytoplasm. The catalysed reaction is N(6)-dimethylallyladenosine(37) in tRNA + (sulfur carrier)-SH + AH2 + 2 S-adenosyl-L-methionine = 2-methylsulfanyl-N(6)-dimethylallyladenosine(37) in tRNA + (sulfur carrier)-H + 5'-deoxyadenosine + L-methionine + A + S-adenosyl-L-homocysteine + 2 H(+). Catalyzes the methylthiolation of N6-(dimethylallyl)adenosine (i(6)A), leading to the formation of 2-methylthio-N6-(dimethylallyl)adenosine (ms(2)i(6)A) at position 37 in tRNAs that read codons beginning with uridine. This is tRNA-2-methylthio-N(6)-dimethylallyladenosine synthase from Xylella fastidiosa (strain M23).